A 287-amino-acid chain; its full sequence is Nucleotide-binding protein HEAR2885 (287 aa).

Glycine 8–serine 15 is an ATP binding site. Residue aspartate 57 to serine 60 participates in GTP binding.

Belongs to the RapZ-like family.

In terms of biological role, displays ATPase and GTPase activities. The protein is Nucleotide-binding protein HEAR2885 of Herminiimonas arsenicoxydans.